Consider the following 596-residue polypeptide: Delta(24(24(1)))-sterol reductase (596 aa).

Positions 1–122 (MSSRYSLRQT…GHATNGHATS (122 aa)) are disordered. Residues 98–112 (NGNGNGYTNGHGNGN) are compositionally biased toward gly residues. Helical transmembrane passes span 168–188 (FGTAAMMTLFPVLMWYMWIGA), 225–245 (VWAWYWSYLIVEGAFYCLLPG), 269–289 (WSLYTTLACLAGLHYSGIWPL), 296–316 (FGPLLSVAILSGFLVSIVAYF), 353–373 (MFFEVRMPWYILLILSLGTAA), 381–401 (YVSGEVWFLVMAHFLYANACA), 419–439 (GFMLIFWNLAGVPLSYCHCTI), and 454–474 (GILAAMFVGYLFWYWVWDSCN). Residues K477, R481, L516, and 528–529 (HY) each bind NADP(+). Residues 535 to 557 (FAVSWGLITGFESPFPWFYPVFF) traverse the membrane as a helical segment. NADP(+) contacts are provided by residues D568, 572–576 (CRRKY), and Y583.

This sequence belongs to the ERG4/ERG24 family.

It is found in the endoplasmic reticulum membrane. It catalyses the reaction ergosterol + NADP(+) = ergosta-5,7,22,24(28)-tetraen-3beta-ol + NADPH + H(+). It functions in the pathway steroid metabolism; ergosterol biosynthesis. Functionally, delta(24(24(1)))-sterol reductase; part of the third module of ergosterol biosynthesis pathway that includes the late steps of the pathway. ERG4 catalyzes the last step of ergosterol biosynthesis by converting ergosta-5,7,22,24(28)-tetraen-3beta-ol into ergosterol. The third module or late pathway involves the ergosterol synthesis itself through consecutive reactions that mainly occur in the endoplasmic reticulum (ER) membrane. Firstly, the squalene synthase ERG9 catalyzes the condensation of 2 farnesyl pyrophosphate moieties to form squalene, which is the precursor of all steroids. Squalene synthase is crucial for balancing the incorporation of farnesyl diphosphate (FPP) into sterol and nonsterol isoprene synthesis. Secondly, squalene is converted into lanosterol by the consecutive action of the squalene epoxidase ERG1 and the lanosterol synthase ERG7. Then, the delta(24)-sterol C-methyltransferase ERG6 methylates lanosterol at C-24 to produce eburicol. Eburicol is the substrate of the sterol 14-alpha demethylase encoded by CYP51A, CYP51B and CYP51C, to yield 4,4,24-trimethyl ergosta-8,14,24(28)-trienol. CYP51B encodes the enzyme primarily responsible for sterol 14-alpha-demethylation, and plays an essential role in ascospore formation. CYP51A encodes an additional sterol 14-alpha-demethylase, induced on ergosterol depletion and responsible for the intrinsic variation in azole sensitivity. The third CYP51 isoform, CYP51C, does not encode a sterol 14-alpha-demethylase, but is required for full virulence on host wheat ears. The C-14 reductase ERG24 then reduces the C14=C15 double bond which leads to 4,4-dimethylfecosterol. A sequence of further demethylations at C-4, involving the C-4 demethylation complex containing the C-4 methylsterol oxidases ERG25, the sterol-4-alpha-carboxylate 3-dehydrogenase ERG26 and the 3-keto-steroid reductase ERG27, leads to the production of fecosterol via 4-methylfecosterol. ERG28 has a role as a scaffold to help anchor ERG25, ERG26 and ERG27 to the endoplasmic reticulum. The C-8 sterol isomerase ERG2 then catalyzes the reaction which results in unsaturation at C-7 in the B ring of sterols and thus converts fecosterol to episterol. The sterol-C5-desaturases ERG3A and ERG3BB then catalyze the introduction of a C-5 double bond in the B ring to produce 5-dehydroepisterol. The C-22 sterol desaturases ERG5A and ERG5B further convert 5-dehydroepisterol into ergosta-5,7,22,24(28)-tetraen-3beta-ol by forming the C-22(23) double bond in the sterol side chain. Finally, ergosta-5,7,22,24(28)-tetraen-3beta-ol is substrate of the C-24(28) sterol reductase ERG4 to produce ergosterol. The polypeptide is Delta(24(24(1)))-sterol reductase (Gibberella zeae (strain ATCC MYA-4620 / CBS 123657 / FGSC 9075 / NRRL 31084 / PH-1) (Wheat head blight fungus)).